A 257-amino-acid polypeptide reads, in one-letter code: Probable amino-acid ABC transporter ATP-binding protein HI_1078 (257 aa).

The ABC transporter domain occupies 4–244 (LKVSNIQKNF…PQHERTKQFL (241 aa)). 36–43 (GPSGSGKT) is an ATP binding site.

The protein belongs to the ABC transporter superfamily.

The protein resides in the cell inner membrane. In terms of biological role, probably part of a binding-protein-dependent transport system for an amino acid. Probably responsible for energy coupling to the transport system. The chain is Probable amino-acid ABC transporter ATP-binding protein HI_1078 from Haemophilus influenzae (strain ATCC 51907 / DSM 11121 / KW20 / Rd).